The primary structure comprises 217 residues: uncharacterized protein (217 aa).

6 consecutive transmembrane segments (helical) span residues 13-35, 50-68, 75-94, 109-131, 152-174, and 194-216; these read IWLT…IALL, FSLV…ILYL, FLLA…EWRI, MMAL…LFSL, YLAI…AAAV, and GFSL…FAGL.

It is found in the cell membrane. This is an uncharacterized protein from Archaeoglobus fulgidus (strain ATCC 49558 / DSM 4304 / JCM 9628 / NBRC 100126 / VC-16).